The sequence spans 225 residues: Putative ankyrin repeat protein RBE_1025 (225 aa).

ANK repeat units follow at residues 6–35 (LSKD…AINP), 41–71 (NGKT…NVNI), 75–120 (TGFT…DVNI), and 124–153 (KGNT…SPFI).

In Rickettsia bellii (strain RML369-C), this protein is Putative ankyrin repeat protein RBE_1025.